We begin with the raw amino-acid sequence, 753 residues long: 5-methyltetrahydropteroyltriglutamate--homocysteine methyltransferase (753 aa).

5-methyltetrahydropteroyltri-L-glutamate is bound by residues 19-22 (RELK) and Arg-113. Residues 430 to 432 (IGS) and Glu-483 each bind L-homocysteine. L-methionine contacts are provided by residues 430–432 (IGS) and Glu-483. Residues 514–515 (RC) and Trp-560 each bind 5-methyltetrahydropteroyltri-L-glutamate. An L-homocysteine-binding site is contributed by Asp-598. Residue Asp-598 coordinates L-methionine. 5-methyltetrahydropteroyltri-L-glutamate is bound at residue Glu-604. His-640, Cys-642, and Glu-664 together coordinate Zn(2+). Catalysis depends on His-693, which acts as the Proton donor. Cys-725 contributes to the Zn(2+) binding site.

It belongs to the vitamin-B12 independent methionine synthase family. Zn(2+) is required as a cofactor.

The enzyme catalyses 5-methyltetrahydropteroyltri-L-glutamate + L-homocysteine = tetrahydropteroyltri-L-glutamate + L-methionine. Its pathway is amino-acid biosynthesis; L-methionine biosynthesis via de novo pathway; L-methionine from L-homocysteine (MetE route): step 1/1. Functionally, catalyzes the transfer of a methyl group from 5-methyltetrahydrofolate to homocysteine resulting in methionine formation. This is 5-methyltetrahydropteroyltriglutamate--homocysteine methyltransferase from Rhodococcus jostii (strain RHA1).